Reading from the N-terminus, the 71-residue chain is Long neurotoxin 1 (71 aa).

Intrachain disulfides connect cysteine 3/cysteine 20, cysteine 14/cysteine 41, cysteine 26/cysteine 30, cysteine 45/cysteine 56, and cysteine 57/cysteine 62.

Belongs to the three-finger toxin family. Long-chain subfamily. Type II alpha-neurotoxin sub-subfamily. In terms of tissue distribution, expressed by the venom gland.

The protein resides in the secreted. Its function is as follows. Binds with high affinity to muscular (alpha-1/CHRNA1) and neuronal (alpha-7/CHRNA7) nicotinic acetylcholine receptor (nAChR) and inhibits acetylcholine from binding to the receptor, thereby impairing neuromuscular and neuronal transmission. In Naja haje haje (Egyptian cobra), this protein is Long neurotoxin 1.